The primary structure comprises 182 residues: ATP-dependent protease subunit HslV (182 aa).

Residue threonine 6 is part of the active site. Residues alanine 164, cysteine 167, and threonine 170 each coordinate Na(+).

It belongs to the peptidase T1B family. HslV subfamily. A double ring-shaped homohexamer of HslV is capped on each side by a ring-shaped HslU homohexamer. The assembly of the HslU/HslV complex is dependent on binding of ATP.

The protein resides in the cytoplasm. It catalyses the reaction ATP-dependent cleavage of peptide bonds with broad specificity.. Allosterically activated by HslU binding. Functionally, protease subunit of a proteasome-like degradation complex believed to be a general protein degrading machinery. This chain is ATP-dependent protease subunit HslV, found in Borreliella burgdorferi (strain ATCC 35210 / DSM 4680 / CIP 102532 / B31) (Borrelia burgdorferi).